The primary structure comprises 1107 residues: Polyphosphatidylinositol phosphatase INP53 (1107 aa).

An SAC domain is found at L142–G482. Position 497 is a phosphoserine (S497). Positions T926–K1107 are disordered. Residues A927–S942 are compositionally biased toward low complexity. The segment covering L943–T956 has biased composition (polar residues). S986 is modified (phosphoserine). 4 stretches are compositionally biased toward polar residues: residues P987 to E1005, F1020 to S1038, N1045 to T1063, and T1097 to K1107. The residue at position 1035 (S1035) is a Phosphoserine. T1105 is subject to Phosphothreonine.

This sequence belongs to the synaptojanin family. In the central section; belongs to the inositol 1,4,5-trisphosphate 5-phosphatase family. Interacts (via SAC domain) with BSP1; the interaction is direct. Interacts with CHC1.

It is found in the cytoplasm. It catalyses the reaction a 1,2-diacyl-sn-glycero-3-phospho-(1D-myo-inositol-4,5-bisphosphate) + H2O = a 1,2-diacyl-sn-glycero-3-phospho-(1D-myo-inositol 4-phosphate) + phosphate. Its function is as follows. Dephosphorylates a number of phosphatidylinositols (PIs) like phosphatidylinositol 4,5-bisphosphate (PtdIns(4,5)P2), but also phosphatidylinositol 3-phosphate (PtdIns(3)P), phosphatidylinositol 4-phosphate (PtdIns(4)P), and phosphatidylinositol 3,5-bisphosphate (PtdIns(3,5)P2). Controls the cellular levels and subcellular distribution of phosphatidylinositol 3-phosphate and phosphatidylinositol 4,5-bisphosphate. Plays an essential role in a TGN (trans Golgi network)-to-early endosome pathway. Involved in clathrin-mediated protein sorting at the TGN. The sequence is that of Polyphosphatidylinositol phosphatase INP53 (INP53) from Saccharomyces cerevisiae (strain ATCC 204508 / S288c) (Baker's yeast).